Reading from the N-terminus, the 111-residue chain is uncharacterized protein (111 aa).

Helical transmembrane passes span 27–47 (IIVLFCLLCIIVTLGVIGYKF) and 80–100 (IFTGIYAVLVGVFFISVISAI).

The protein resides in the membrane. This is an uncharacterized protein from Acanthamoeba polyphaga (Amoeba).